The primary structure comprises 265 residues: Nitrogenase vanadium-iron protein alpha chain (265 aa).

Positions 17 and 80 each coordinate [8Fe-7S] cluster. C199 contacts [7Fe-V-9S-C-homocitryl] cluster.

The protein belongs to the NifD/NifK/NifE/NifN family. In terms of assembly, hexamer of two alpha, two beta, and two delta chains. It depends on [8Fe-7S] cluster as a cofactor. Requires [7Fe-V-9S-C-homocitryl] cluster as cofactor.

It carries out the reaction N2 + 8 reduced [2Fe-2S]-[ferredoxin] + 16 ATP + 16 H2O = H2 + 8 oxidized [2Fe-2S]-[ferredoxin] + 2 NH4(+) + 16 ADP + 16 phosphate + 6 H(+). Its function is as follows. This vanadium-iron protein is part of the nitrogenase complex that catalyzes the key enzymatic reactions in nitrogen fixation. The protein is Nitrogenase vanadium-iron protein alpha chain (vnfD) of Azorhizophilus paspali (Azotobacter paspali).